Reading from the N-terminus, the 393-residue chain is Protein phosphatase 2C homolog 4 (393 aa).

One can recognise a PPM-type phosphatase domain in the interval 33–368 (YNCVGSMQGY…DNMTAIIVVL (336 aa)). Mn(2+)-binding residues include Asp83, Gly84, Asp310, and Asp359.

Belongs to the PP2C family. The cofactor is Mg(2+). Requires Mn(2+) as cofactor.

The catalysed reaction is O-phospho-L-seryl-[protein] + H2O = L-seryl-[protein] + phosphate. The enzyme catalyses O-phospho-L-threonyl-[protein] + H2O = L-threonyl-[protein] + phosphate. This chain is Protein phosphatase 2C homolog 4 (PTC4), found in Saccharomyces cerevisiae (strain ATCC 204508 / S288c) (Baker's yeast).